We begin with the raw amino-acid sequence, 327 residues long: Carboxylesterase 20 (327 aa).

An Involved in the stabilization of the negatively charged intermediate by the formation of the oxyanion hole motif is present at residues 87 to 89; the sequence is HGG. Residue Ser-166 is the Nucleophile of the active site. Active-site residues include Asp-272 and His-302.

It belongs to the 'GDXG' lipolytic enzyme family. In terms of tissue distribution, expressed in roots, stems, flowers and siliques.

It catalyses the reaction a carboxylic ester + H2O = an alcohol + a carboxylate + H(+). Esterase activity measured in vitro with the synthetic substrate p-nitrophenyl acetate (pNPA) is inhibited by strigolactone. Carboxylesterase that possesses esterase activity in vitro with the synthetic substrate p-nitrophenyl acetate (pNPA). Binds strigolactones, but is not able to hydrolyze them. May be involved in the regulation of shoot branching. This chain is Carboxylesterase 20, found in Arabidopsis thaliana (Mouse-ear cress).